Here is a 379-residue protein sequence, read N- to C-terminus: Homoserine O-succinyltransferase (379 aa).

The region spanning Asn51 to Leu360 is the AB hydrolase-1 domain. The active-site Nucleophile is Ser157. Arg227 lines the substrate pocket. Residues Asp323 and His356 contribute to the active site. Residue Asp357 coordinates substrate.

The protein belongs to the AB hydrolase superfamily. MetX family. In terms of assembly, homodimer.

The protein localises to the cytoplasm. It catalyses the reaction L-homoserine + succinyl-CoA = O-succinyl-L-homoserine + CoA. Its pathway is amino-acid biosynthesis; L-methionine biosynthesis via de novo pathway; O-succinyl-L-homoserine from L-homoserine: step 1/1. Functionally, transfers a succinyl group from succinyl-CoA to L-homoserine, forming succinyl-L-homoserine. The sequence is that of Homoserine O-succinyltransferase from Pseudomonas putida (strain ATCC 700007 / DSM 6899 / JCM 31910 / BCRC 17059 / LMG 24140 / F1).